Reading from the N-terminus, the 540-residue chain is MSFKFNSGTFEDNTFNEQIRDRLTRALNPSRFENPESTSGQDGSDSQKKPKKLDILKSGVTVRQVDFRTIPQLEILDLDVSAQSKSLLKGICKISCKDAMIQITTEIEANLLLLYEAVSPEFTTPKLISNDSFTVPITMTFDHIELEAITNIFVKNTGVGISFNDVNLDFRFECSMKLLQTSIEKRLKNSMETIFKDVLPSVIFNMSQRWFTHGPELVEDPSLIATDSALSEVTPMTILDDSDLQDLSPATMLRLSTLISSRQSLALNPISSHTVATIPGCIERQNLRRFSSRIPSLNNYYAQEVGKHRPSKILPTRENSNSIIANKMASDFIQNSLPTEVLESGSYNIREIANIQQRIYERNNEENVIRRRRIRLGKRSKSVQDTAAKMHPVPESGSLHPIIQPSTTPAATVTPLLSPQPVVAKSPPESMTPNTLPEQSPYTSNIAIDKIPDLTLPQAQLQKDKVPMRLNLLEESYFKSDLKDLRNSLYSPMRNQRFYVQSEDGARPSLLDGKRFSFVGLANQQMKWGNDDLPPPYKAN.

The SMP-LTD domain maps to 1-208 (MSFKFNSGTF…LPSVIFNMSQ (208 aa)). 2 disordered regions span residues 26-51 (ALNP…KKPK) and 379-399 (RSKS…SGSL). Over residues 35 to 44 (PESTSGQDGS) the composition is skewed to polar residues.

The protein belongs to the MDM34 family. In terms of assembly, component of the ER-mitochondria encounter structure (ERMES) or MDM complex, composed of MMM1, MDM10, MDM12 and MDM34.

The protein resides in the mitochondrion outer membrane. Its function is as follows. Component of the ERMES/MDM complex, which serves as a molecular tether to connect the endoplasmic reticulum (ER) and mitochondria. Components of this complex are involved in the control of mitochondrial shape and protein biogenesis, and function in nonvesicular lipid trafficking between the ER and mitochondria. MDM34 is required for the interaction of the ER-resident membrane protein MMM1 and the outer mitochondrial membrane-resident beta-barrel protein MDM10. In Kluyveromyces lactis (strain ATCC 8585 / CBS 2359 / DSM 70799 / NBRC 1267 / NRRL Y-1140 / WM37) (Yeast), this protein is Mitochondrial distribution and morphology protein 34.